The chain runs to 158 residues: S-ribosylhomocysteine lyase (158 aa).

Residues H56, H60, and C125 each contribute to the Fe cation site.

The protein belongs to the LuxS family. In terms of assembly, homodimer. Fe cation serves as cofactor.

The enzyme catalyses S-(5-deoxy-D-ribos-5-yl)-L-homocysteine = (S)-4,5-dihydroxypentane-2,3-dione + L-homocysteine. Functionally, involved in the synthesis of autoinducer 2 (AI-2) which is secreted by bacteria and is used to communicate both the cell density and the metabolic potential of the environment. The regulation of gene expression in response to changes in cell density is called quorum sensing. Catalyzes the transformation of S-ribosylhomocysteine (RHC) to homocysteine (HC) and 4,5-dihydroxy-2,3-pentadione (DPD). This Leuconostoc mesenteroides subsp. mesenteroides (strain ATCC 8293 / DSM 20343 / BCRC 11652 / CCM 1803 / JCM 6124 / NCDO 523 / NBRC 100496 / NCIMB 8023 / NCTC 12954 / NRRL B-1118 / 37Y) protein is S-ribosylhomocysteine lyase.